We begin with the raw amino-acid sequence, 273 residues long: Large ribosomal subunit protein uL2cy (273 aa).

Disordered stretches follow at residues 1–27 (MAIH…SNPR) and 224–273 (NPVD…RRRK).

Belongs to the universal ribosomal protein uL2 family. In terms of assembly, part of the 50S ribosomal subunit.

Its subcellular location is the plastid. It localises to the chloroplast. The polypeptide is Large ribosomal subunit protein uL2cy (rpl2-B) (Liriodendron tulipifera (Tuliptree)).